We begin with the raw amino-acid sequence, 278 residues long: Probable 3-hydroxybutyryl-CoA dehydrogenase (278 aa).

It belongs to the 3-hydroxyacyl-CoA dehydrogenase family.

The enzyme catalyses (3S)-3-hydroxybutanoyl-CoA + NADP(+) = acetoacetyl-CoA + NADPH + H(+). Its pathway is lipid metabolism; butanoate metabolism. The protein is Probable 3-hydroxybutyryl-CoA dehydrogenase (hbd) of Deinococcus radiodurans (strain ATCC 13939 / DSM 20539 / JCM 16871 / CCUG 27074 / LMG 4051 / NBRC 15346 / NCIMB 9279 / VKM B-1422 / R1).